Consider the following 88-residue polypeptide: Class I hydrophobin F (88 aa).

Positions 1–21 (MLSRLFTVPAILLATLGSAAT) are cleaved as a signal peptide. Cystine bridges form between C30–C67, C34–C58, C35–C51, and C68–C84.

This sequence belongs to the fungal hydrophobin family.

It localises to the secreted. The protein resides in the cell wall. It is found in the vacuole. The protein localises to the cytoplasmic vesicle. Functionally, aerial growth, conidiation, and dispersal of filamentous fungi in the environment rely upon a capability of their secreting small amphipathic proteins called hydrophobins (HPBs) with low sequence identity. Class I can self-assemble into an outermost layer of rodlet bundles on aerial cell surfaces, conferring cellular hydrophobicity that supports fungal growth, development and dispersal; whereas Class II form highly ordered films at water-air interfaces through intermolecular interactions but contribute nothing to the rodlet structure. Hyd1F contributes to certain cell wall-related features, such as hydrophobicity but is not involved in cell wall-related events during fungal proliferation in host hemocoel. Does not contribute to conidial hydrophobicity. In Beauveria bassiana (strain ARSEF 2860) (White muscardine disease fungus), this protein is Class I hydrophobin F.